We begin with the raw amino-acid sequence, 128 residues long: Large ribosomal subunit protein bL17 (128 aa).

Belongs to the bacterial ribosomal protein bL17 family. As to quaternary structure, part of the 50S ribosomal subunit. Contacts protein L32.

The polypeptide is Large ribosomal subunit protein bL17 (Streptococcus thermophilus (strain ATCC BAA-250 / LMG 18311)).